The sequence spans 405 residues: Type III polyketide synthase 10 (405 aa).

Residues 1–18 (MVSTNAGGIASKQASSMA) are compositionally biased toward polar residues. Residues 1–20 (MVSTNAGGIASKQASSMAPN) form a disordered region. Cysteine 170 (nucleophile) is an active-site residue.

It belongs to the thiolase-like superfamily. Chalcone/stilbene synthases family. As to quaternary structure, interacts with STS1. As to expression, expressed in adult flowers.

The protein resides in the endoplasmic reticulum. In terms of biological role, plant type III polyketide synthases (PKSs) that catalyzes the condensation of fatty acyl-CoA with malonyl-CoA to generate triketide and tetraketide alpha-pyrones, the main components of pollen exine and potential sporopollenin precursors. May be involved in the synthesis of sporopollenin precursors in tapetal cells to regulate pollen wall formation. Required for exine and Ubisch body formation in anthers. Does not possess chalcone synthase (CHS) activity in vitro with the substrates 4-coumaroyl-CoA and malonyl-CoA. The protein is Type III polyketide synthase 10 of Oryza sativa subsp. japonica (Rice).